Here is a 494-residue protein sequence, read N- to C-terminus: DnaJ-related protein rsp1 (494 aa).

A J domain is found at 12 to 78 (DYYTILGAES…KLRELFDQRR (67 aa)). The span at 229–242 (SEISNGLNSNGVEN) shows a compositional bias: polar residues. The disordered stretch occupies residues 229-354 (SEISNGLNSN…NDSTSNSTEY (126 aa)). Residues 243–256 (SSITKSSPRSSSSS) are compositionally biased toward low complexity. Positions 270–287 (IFTSPNTPEHPSVYQTDI) are enriched in polar residues. Residues 321 to 331 (LSRSKSSSLSR) show a composition bias toward low complexity. The segment covering 332–354 (NQTRSQLNDLSAENDSTSNSTEY) has biased composition (polar residues).

As to quaternary structure, interacts iwth ssa1.

The protein localises to the cytoplasm. Its subcellular location is the cytoskeleton. It is found in the nucleus. Functionally, has a role in the proper organization of the interphase microtubule cytoskeleton. Required for equatorial microtubule organizing center (eMTOC) disassembly into satellites, contributing to the dynamic redistribution of MTOC components for organization of interphase microtubules. The protein is DnaJ-related protein rsp1 (rsp1) of Schizosaccharomyces pombe (strain 972 / ATCC 24843) (Fission yeast).